A 596-amino-acid chain; its full sequence is Thioredoxin reductase 1, mitochondrial (596 aa).

The disordered stretch occupies residues 59 to 87 (LTGQRGSRDSTGATGGNAPAGSGAGAPPP). Positions 68 to 79 (STGATGGNAPAG) are enriched in low complexity. Residues 120–126 (IGGGSAG), 143–147 (LDFVK), 159–170 (GGTCVNVGCIPK), 233–235 (GLG), 262–266 (AVGGR), Ser-282, Phe-286, and Tyr-302 contribute to the FAD site. Residues Cys-162 and Cys-167 are joined by a disulfide bond. NADP(+)-binding positions include 322 to 328 (VRSIVLR) and Pro-355. FAD-binding positions include 392–399 (RKGLVDDL), 429–432 (VGDI), 438–443 (ELTPVA), and Phe-472. The Proton acceptor role is filled by His-569. Pro-570 contacts FAD. Cys-594 and Cys-595 are oxidised to a cystine.

It belongs to the class-I pyridine nucleotide-disulfide oxidoreductase family. As to quaternary structure, homodimer. FAD is required as a cofactor. In terms of tissue distribution, during embryogenesis, expression is seen in germ cell progenitors, developing midgut, hindgut and proventriculus.

The protein resides in the mitochondrion. Its subcellular location is the cytoplasm. The enzyme catalyses [thioredoxin]-dithiol + NADP(+) = [thioredoxin]-disulfide + NADPH + H(+). In terms of biological role, thioredoxin system is a major player in glutathione metabolism, due to the demonstrated absence of a glutathione reductase. Functionally interacts with the Sod/Cat reactive oxidation species (ROS) defense system and thereby has a role in preadult development and life span. Lack of a glutathione reductase suggests antioxidant defense in Drosophila, and probably in related insects, differs fundamentally from that in other organisms. This Drosophila melanogaster (Fruit fly) protein is Thioredoxin reductase 1, mitochondrial.